A 353-amino-acid polypeptide reads, in one-letter code: S-adenosylmethionine:tRNA ribosyltransferase-isomerase (353 aa).

It belongs to the QueA family. Monomer.

It is found in the cytoplasm. It carries out the reaction 7-aminomethyl-7-carbaguanosine(34) in tRNA + S-adenosyl-L-methionine = epoxyqueuosine(34) in tRNA + adenine + L-methionine + 2 H(+). Its pathway is tRNA modification; tRNA-queuosine biosynthesis. In terms of biological role, transfers and isomerizes the ribose moiety from AdoMet to the 7-aminomethyl group of 7-deazaguanine (preQ1-tRNA) to give epoxyqueuosine (oQ-tRNA). This chain is S-adenosylmethionine:tRNA ribosyltransferase-isomerase, found in Nitrosomonas europaea (strain ATCC 19718 / CIP 103999 / KCTC 2705 / NBRC 14298).